A 60-amino-acid polypeptide reads, in one-letter code: MGQLKITQHKGLVGAKQNQKDSMRTLGLRKIRQSVVRPDTPDVRGLVNVVHHLVTVEEVD.

Belongs to the universal ribosomal protein uL30 family. Part of the 50S ribosomal subunit.

In Saccharopolyspora erythraea (strain ATCC 11635 / DSM 40517 / JCM 4748 / NBRC 13426 / NCIMB 8594 / NRRL 2338), this protein is Large ribosomal subunit protein uL30.